The primary structure comprises 324 residues: Elongation factor P--(R)-beta-lysine ligase (324 aa).

Ser75–Glu77 lines the substrate pocket. Residues Arg99 to Glu101 and Asn108 contribute to the ATP site. Tyr117 lines the substrate pocket. An ATP-binding site is contributed by Glu243–Leu244. Residue Glu250 participates in substrate binding. An ATP-binding site is contributed by Gly299.

This sequence belongs to the class-II aminoacyl-tRNA synthetase family. EpmA subfamily. As to quaternary structure, homodimer.

It catalyses the reaction D-beta-lysine + L-lysyl-[protein] + ATP = N(6)-((3R)-3,6-diaminohexanoyl)-L-lysyl-[protein] + AMP + diphosphate + H(+). With EpmB is involved in the beta-lysylation step of the post-translational modification of translation elongation factor P (EF-P). Catalyzes the ATP-dependent activation of (R)-beta-lysine produced by EpmB, forming a lysyl-adenylate, from which the beta-lysyl moiety is then transferred to the epsilon-amino group of a conserved specific lysine residue in EF-P. The sequence is that of Elongation factor P--(R)-beta-lysine ligase from Pseudoalteromonas translucida (strain TAC 125).